The primary structure comprises 200 residues: Dual-action ribosomal maturation protein DarP (200 aa).

2 disordered regions span residues 1 to 25 (MTRK…DRPS) and 177 to 200 (TASG…DDEA). Residues 12–25 (HAAEVDDNGYDRPS) are compositionally biased toward basic and acidic residues. Residues 184 to 200 (GDDEAADEAGDDHDDEA) show a composition bias toward acidic residues.

It belongs to the DarP family.

Its subcellular location is the cytoplasm. Member of a network of 50S ribosomal subunit biogenesis factors which assembles along the 30S-50S interface, preventing incorrect 23S rRNA structures from forming. Promotes peptidyl transferase center (PTC) maturation. This Burkholderia ambifaria (strain MC40-6) protein is Dual-action ribosomal maturation protein DarP.